A 171-amino-acid chain; its full sequence is Endoribonuclease YbeY (171 aa).

Zn(2+) is bound by residues H130, H134, and H140.

This sequence belongs to the endoribonuclease YbeY family. Requires Zn(2+) as cofactor.

The protein localises to the cytoplasm. Single strand-specific metallo-endoribonuclease involved in late-stage 70S ribosome quality control and in maturation of the 3' terminus of the 16S rRNA. The polypeptide is Endoribonuclease YbeY (Neisseria meningitidis serogroup A / serotype 4A (strain DSM 15465 / Z2491)).